The primary structure comprises 415 residues: Actin-like protein 7B (415 aa).

The tract at residues 1–35 (MATRNSPMALGTAQGDPGEAGTRPGSDAGLRDTGA) is disordered. Serine 6 is modified (phosphoserine).

It belongs to the actin family.

The protein resides in the cytoplasm. It is found in the cytoskeleton. This is Actin-like protein 7B (ACTL7B) from Macaca fascicularis (Crab-eating macaque).